A 268-amino-acid polypeptide reads, in one-letter code: Tetraspanin-33 (268 aa).

Topologically, residues 1 to 23 are cytoplasmic; the sequence is MVRKSPGSGKEEDFTFISPVVKY. The chain crosses the membrane as a helical span at residues 24–44; the sequence is LLIFFNMLFWVISMVMVGIGV. Topologically, residues 45–63 are extracellular; the sequence is YARLLKHAEAAMACLAVDP. A helical transmembrane segment spans residues 64 to 84; that stretch reads ALLLIGVGILMFLITFCGCIG. Over 85-95 the chain is Cytoplasmic; it reads SLRENICLLQT. Residues 96-116 form a helical membrane-spanning segment; it reads FSICLTLVFLLQLAVGIVGFI. Over 117–226 the chain is Extracellular; sequence FSDKARGKVS…FIHTNGCIDR (110 aa). Intrachain disulfides connect cysteine 155/cysteine 223, cysteine 156/cysteine 188, cysteine 172/cysteine 182, and cysteine 189/cysteine 202. Residues asparagine 171 and asparagine 176 are each glycosylated (N-linked (GlcNAc...) asparagine). The chain crosses the membrane as a helical span at residues 227–247; the sequence is LVNWIHSNLFLLGGVALGLAI. Residues 248–268 are Cytoplasmic-facing; it reads PQVTKHLRAKLIYTWRIGIQV.

Belongs to the tetraspanin (TM4SF) family. Homodimer; disulfide-linked.

The protein localises to the cell membrane. It localises to the cell junction. It is found in the adherens junction. The protein resides in the cytoplasm. In terms of biological role, part of TspanC8 subgroup, composed of 6 members that interact with the transmembrane metalloprotease ADAM10. This interaction is required for ADAM10 exit from the endoplasmic reticulum and for enzymatic maturation and trafficking to the cell surface as well as substrate specificity. Different TspanC8/ADAM10 complexes have distinct substrates. This chain is Tetraspanin-33 (tspan33), found in Xenopus laevis (African clawed frog).